A 652-amino-acid polypeptide reads, in one-letter code: MNKITYMTIKISIPKYMSRIYHGLFDTGANICICKKKVLPDELWHKTENLVLRGFNDEKHVAEYRADNITIMIAKEKFIIPYIYAMDEMSPDIIIGATFYNKYSPIELDIGKGIIKFTKNNEKYPNYLVKYPKKRKLVPWTKGNPSVTETMENIGINQIESRNPIEEEINQILGTDIYGENPLEKWEKHKTLAKIELKNETDNIYKPPMLYQETDLPEFKMHIEEMIKEGFIEEKTNFEDKKYSSPAFIVNKHSEQKRGKTRMVIDYKDLNKKAKVVKYPIPNKDTLIHRSIQARYYSKFDCKSGFYHIKLEEDSKKYTAFTVPQGYYQWKVLPFGYHNSPSIFQQFMDRIFRPYYDFIIVYIDDILVFSKTIEEHKIHIAKFRDITLANGLIISKKKTELCKEKIDFLGVQIEQGGIELQPHIINKILEKHTKIKNKTELQSILGLLNQIRHFIPHLAQILLPIQKKLKIKDEEIWTWTKEDEEKIKLIQDYSKNLVIKMKYPINKEDMNWIIEVDASNNAYGSCLKYKPKNSKIEYLCRYNSGTFKENEQKYDINRKELIAVYQGLQSYSLFTCEGNKLVRTDNSQVYYWIKNDTNKKSIEFRNIKYLLAKIAVYNFEIQLIDGKTNIIADYLSRYNSSDTDGRYDEANT.

The Peptidase A2 domain occupies 21–99 (YHGLFDTGAN…SPDIIIGATF (79 aa)). D26 is an active-site residue. A Reverse transcriptase domain is found at 231-413 (FIEEKTNFED…EKIDFLGVQI (183 aa)). 3 residues coordinate Mg(2+): D301, D364, and D365.

It catalyses the reaction DNA(n) + a 2'-deoxyribonucleoside 5'-triphosphate = DNA(n+1) + diphosphate. The enzyme catalyses Endonucleolytic cleavage to 5'-phosphomonoester.. Functionally, encodes for at least two polypeptides: protease (PR) and reverse transcriptase (RT). The protease processes the polyprotein in cis. Reverse transcriptase is multifunctional enzyme that converts the viral RNA genome into dsDNA in viral cytoplasmic capsids. This enzyme displays a DNA polymerase activity that can copy either DNA or RNA templates, and a ribonuclease H (RNase H) activity that cleaves the RNA strand of RNA-DNA heteroduplexes in a partially processive 3'- to 5'-endonucleasic mode. Neo-synthesized pregenomic RNA (pgRNA) are encapsidated, and reverse-transcribed inside the nucleocapsid. Partial (+)DNA is synthesized from the (-)DNA template and generates the relaxed circular DNA (RC-DNA) genome. After budding and infection, the RC-DNA migrates in the nucleus, and is converted into a plasmid-like covalently closed circular DNA (cccDNA). This chain is Putative enzymatic polyprotein, found in Cassava vein mosaic virus (CsVMV).